Reading from the N-terminus, the 320-residue chain is Beta-carotene 3-hydroxylase, chloroplastic (320 aa).

Residues 1 to 78 constitute a chloroplast transit peptide; it reads METQFLVSGR…EKELRGKLVV (78 aa). A run of 2 helical transmembrane segments spans residues 118 to 138 and 152 to 172; these read YLVA…LSVY and LSEM…MEFW. The Fatty acid hydroxylase domain occupies 165 to 292; the sequence is AAVGMEFWAR…KFNGVPYGLF (128 aa). Positions 177-182 match the Histidine box-1 motif; that stretch reads HEALWH. A Histidine box-2 motif is present at residues 189 to 193; sequence HESHH. 2 consecutive transmembrane segments (helical) span residues 204-224 and 228-248; these read DIFA…GFFH and IPGL…AYMF. Residues 250–255 carry the Histidine box-3 motif; the sequence is HDGLVH. The short motif at 276–280 is the Histidine box-4 element; sequence HTLHH.

The protein belongs to the sterol desaturase family.

The protein localises to the plastid. Its subcellular location is the chloroplast membrane. It catalyses the reaction all-trans-beta-carotene + 4 reduced [2Fe-2S]-[ferredoxin] + 2 O2 + 4 H(+) = all-trans-zeaxanthin + 4 oxidized [2Fe-2S]-[ferredoxin] + 2 H2O. Functionally, nonheme diiron monooxygenase involved in the biosynthesis of xanthophylls. Specific for beta-ring hydroxylations of beta-carotene. Uses ferredoxin as an electron donor. This Gentiana lutea (Yellow gentian) protein is Beta-carotene 3-hydroxylase, chloroplastic (BHY).